The following is a 363-amino-acid chain: Mitogen-activated protein kinase 12 (363 aa).

Residues 25–309 (YKDLKQVGTG…AAEALAFPFF (285 aa)) enclose the Protein kinase domain. Residues 31-39 (VGTGAYGTV) and Lys54 each bind ATP. Asp151 acts as the Proton acceptor in catalysis. Position 181 is a phosphothreonine (Thr181). The short motif at 181 to 183 (TGY) is the TXY element. Tyr183 carries the post-translational modification Phosphotyrosine.

This sequence belongs to the protein kinase superfamily. CMGC Ser/Thr protein kinase family. MAP kinase subfamily. Mg(2+) is required as a cofactor. In terms of processing, dually phosphorylated on Thr-181 and Tyr-183, which activates the enzyme.

The protein localises to the cytoplasm. The enzyme catalyses L-seryl-[protein] + ATP = O-phospho-L-seryl-[protein] + ADP + H(+). It carries out the reaction L-threonyl-[protein] + ATP = O-phospho-L-threonyl-[protein] + ADP + H(+). With respect to regulation, activated by threonine and tyrosine phosphorylation. Its function is as follows. Serine/threonine kinase which acts as an essential component of the MAP kinase signal transduction pathway. MAPK12 is one of the four p38 MAPKs which play an important role in the cascades of cellular responses evoked by extracellular stimuli such as pro-inflammatory cytokines or physical stress leading to direct activation of transcription factors. Accordingly, p38 MAPKs phosphorylate a broad range of proteins and it has been estimated that they may have approximately 200 to 300 substrates each. Some of the targets are downstream kinases such as MAPKAPK2, which are activated through phosphorylation and further phosphorylate additional targets. The sequence is that of Mitogen-activated protein kinase 12 (mapk12) from Danio rerio (Zebrafish).